We begin with the raw amino-acid sequence, 253 residues long: MAGHSKFKNIQHRKGAQDKKRAKVFTKLIREIVTAAKTGSSNNPENNPRLRNALTAARSQNLPKERIDKALNSANESSNNENYTEIRYEGYAPNGIAIIVEALTDNKNRTAAEVRSSFTKYGGSLGETGSVNYLFNHCGVIQYPINIASNEDVLEAVIEAGGHDIISDDTTHTIYTDVENFSKVLDFFTGKYGIPEDSYIGWIPLNTIIIDDKEKAAKLLKLVEVLEESDDVQRVFGNYELSDDVYEIIQGEP.

A disordered region spans residues 1-21; sequence MAGHSKFKNIQHRKGAQDKKR.

Belongs to the TACO1 family.

The protein localises to the cytoplasm. The polypeptide is Probable transcriptional regulatory protein A1G_04400 (Rickettsia rickettsii (strain Sheila Smith)).